We begin with the raw amino-acid sequence, 258 residues long: tRNA pseudouridine synthase A (258 aa).

Asp52 serves as the catalytic Nucleophile. Tyr110 contributes to the substrate binding site.

It belongs to the tRNA pseudouridine synthase TruA family. As to quaternary structure, homodimer.

The enzyme catalyses uridine(38/39/40) in tRNA = pseudouridine(38/39/40) in tRNA. Formation of pseudouridine at positions 38, 39 and 40 in the anticodon stem and loop of transfer RNAs. The sequence is that of tRNA pseudouridine synthase A from Francisella tularensis subsp. tularensis (strain FSC 198).